A 101-amino-acid polypeptide reads, in one-letter code: Cilia- and flagella-associated protein 141 (101 aa).

Microtubule inner protein component of sperm flagellar doublet microtubules. As to expression, expressed in trachea multiciliated cells.

It localises to the cytoplasm. The protein resides in the cytoskeleton. Its subcellular location is the cilium axoneme. It is found in the flagellum axoneme. In terms of biological role, microtubule inner protein (MIP) part of the dynein-decorated doublet microtubules (DMTs) in cilia axoneme, which is required for motile cilia beating. The sequence is that of Cilia- and flagella-associated protein 141 from Bos taurus (Bovine).